A 128-amino-acid polypeptide reads, in one-letter code: MLLKSIHHIAIICSDYEKSKAFYVHKLGFQVIQETYREERGSYKLDLSLNGSYVIELFSFPDPPERQTRPEAAGLRHLAFTVGSLDKAVQELHEKGIETEPIRTDPLTGKRFTFFFDPDQLPLELYEQ.

Residues 5–128 (SIHHIAIICS…DQLPLELYEQ (124 aa)) enclose the VOC domain. Residues His8, Glu56, His77, and Glu124 each contribute to the a divalent metal cation site.

This is an uncharacterized protein from Bacillus subtilis (strain 168).